The following is a 151-amino-acid chain: Cytochrome c-type biogenesis protein CcmE (151 aa).

Residues 1–8 (MNPQRKKR) are Cytoplasmic-facing. A helical; Signal-anchor for type II membrane protein membrane pass occupies residues 9–29 (LLLIVGLLVGVGVAVGFALSA). Topologically, residues 30 to 151 (LQQNINLFYT…QAAAGGETKP (122 aa)) are periplasmic. The heme site is built by His-124 and Tyr-128.

It belongs to the CcmE/CycJ family.

It localises to the cell inner membrane. Functionally, heme chaperone required for the biogenesis of c-type cytochromes. Transiently binds heme delivered by CcmC and transfers the heme to apo-cytochromes in a process facilitated by CcmF and CcmH. The polypeptide is Cytochrome c-type biogenesis protein CcmE (Pseudomonas putida (strain ATCC 700007 / DSM 6899 / JCM 31910 / BCRC 17059 / LMG 24140 / F1)).